A 186-amino-acid chain; its full sequence is Superoxide dismutase [Cu-Zn] (186 aa).

Positions 1 to 22 (MNMKTLLALAVSAVCSVSVAQA) are cleaved as a signal peptide. Positions 79, 81, and 104 each coordinate Cu cation. A disulfide bridge links Cys86 with Cys182. Positions 104, 113, 122, and 125 each coordinate Zn(2+). His160 contacts Cu cation.

The protein belongs to the Cu-Zn superoxide dismutase family. In terms of assembly, homodimer. Cu cation serves as cofactor. It depends on Zn(2+) as a cofactor.

Its subcellular location is the periplasm. It catalyses the reaction 2 superoxide + 2 H(+) = H2O2 + O2. In terms of biological role, destroys radicals which are normally produced within the cells and which are toxic to biological systems. The sequence is that of Superoxide dismutase [Cu-Zn] (sodC) from Neisseria meningitidis serogroup A / serotype 4A (strain DSM 15465 / Z2491).